The following is a 671-amino-acid chain: UvrABC system protein B (671 aa).

The Helicase ATP-binding domain maps to 26–183; the sequence is EGLENGLAHQ…RRLSELQYSR (158 aa). Residue 39-46 coordinates ATP; the sequence is GVTGSGKT. A Beta-hairpin motif is present at residues 92 to 115; it reads YYDYYQPEAYVPSSDTFIEKDASV. The Helicase C-terminal domain maps to 431-593; it reads QVDDLLSEIR…IIPQGLNKKI (163 aa). The region spanning 631–666 is the UVR domain; sequence DQKIRELEAKMYTYAQNLEFEQAAELRDQVHQLRQQ.

The protein belongs to the UvrB family. Forms a heterotetramer with UvrA during the search for lesions. Interacts with UvrC in an incision complex.

The protein resides in the cytoplasm. The UvrABC repair system catalyzes the recognition and processing of DNA lesions. A damage recognition complex composed of 2 UvrA and 2 UvrB subunits scans DNA for abnormalities. Upon binding of the UvrA(2)B(2) complex to a putative damaged site, the DNA wraps around one UvrB monomer. DNA wrap is dependent on ATP binding by UvrB and probably causes local melting of the DNA helix, facilitating insertion of UvrB beta-hairpin between the DNA strands. Then UvrB probes one DNA strand for the presence of a lesion. If a lesion is found the UvrA subunits dissociate and the UvrB-DNA preincision complex is formed. This complex is subsequently bound by UvrC and the second UvrB is released. If no lesion is found, the DNA wraps around the other UvrB subunit that will check the other stand for damage. The sequence is that of UvrABC system protein B from Yersinia pestis bv. Antiqua (strain Antiqua).